Consider the following 351-residue polypeptide: Alcohol dehydrogenase 5 (351 aa).

Residues Cys-47, His-70, Cys-101, Cys-104, Cys-107, Cys-115, and Cys-183 each contribute to the Zn(2+) site. NAD(+) is bound by residues Gly-181–Gly-187, Asp-205, Lys-210, Val-272–Met-274, and Arg-344.

It belongs to the zinc-containing alcohol dehydrogenase family. It depends on Zn(2+) as a cofactor.

It catalyses the reaction a primary alcohol + NAD(+) = an aldehyde + NADH + H(+). The enzyme catalyses a secondary alcohol + NAD(+) = a ketone + NADH + H(+). This Saccharomyces pastorianus (Lager yeast) protein is Alcohol dehydrogenase 5 (ADH5).